The following is a 551-amino-acid chain: Sodium-dependent high-affinity dicarboxylate transporter 2 (551 aa).

10 helical membrane passes run 9-29 (LIKKLLVLLGPLVAVPLLFFG), 34-54 (CLFSIIFLSTYWIGEAFPIGV), 82-102 (SIVLFMCTLIMAMAVEATGLH), 119-139 (VMLLGFMCITSFISFFVSDTA), 194-214 (FCKALILACAHASLIGGTAII), 243-263 (WMVFAIPPMFVYLLASYIILV), 347-367 (VSGVLISCILFVWPKDPFDPI), 417-437 (IFVGMSSLPLQLTVTTIIVIM), 449-469 (IFIPISLGVAESMGVHPLYLA), and 497-517 (VISMVEMIVCGFLLNIACILI).

This sequence belongs to the SLC13A/DASS transporter (TC 2.A.47) family. NADC subfamily.

It is found in the membrane. Functionally, high-affinity sodium-dicarboxylate cotransporter that accepts a range of tricarboxylic acid-cycle intermediates with 4-5 carbon atoms. There is no interaction with monocarboxylates. This is Sodium-dependent high-affinity dicarboxylate transporter 2 (nac-2) from Caenorhabditis elegans.